The following is a 215-amino-acid chain: Urease accessory protein UreG (215 aa).

Glycine 24 to threonine 31 is a binding site for GTP.

The protein belongs to the SIMIBI class G3E GTPase family. UreG subfamily. As to quaternary structure, homodimer. UreD, UreF and UreG form a complex that acts as a GTP-hydrolysis-dependent molecular chaperone, activating the urease apoprotein by helping to assemble the nickel containing metallocenter of UreC. The UreE protein probably delivers the nickel.

The protein localises to the cytoplasm. Facilitates the functional incorporation of the urease nickel metallocenter. This process requires GTP hydrolysis, probably effectuated by UreG. The chain is Urease accessory protein UreG from Burkholderia ambifaria (strain ATCC BAA-244 / DSM 16087 / CCUG 44356 / LMG 19182 / AMMD) (Burkholderia cepacia (strain AMMD)).